The following is a 325-amino-acid chain: ATPase GET3 (325 aa).

Position 34 to 41 (34 to 41) interacts with ATP; sequence KGGVGKTT. Asp63 is a catalytic residue. 2 residues coordinate ATP: Glu243 and Asn270. Positions 281 and 284 each coordinate Zn(2+).

It belongs to the arsA ATPase family. As to quaternary structure, homodimer.

The protein resides in the cytoplasm. The protein localises to the endoplasmic reticulum. ATPase required for the post-translational delivery of tail-anchored (TA) proteins to the endoplasmic reticulum. Recognizes and selectively binds the transmembrane domain of TA proteins in the cytosol. This complex then targets to the endoplasmic reticulum by membrane-bound receptors, where the tail-anchored protein is released for insertion. This process is regulated by ATP binding and hydrolysis. ATP binding drives the homodimer towards the closed dimer state, facilitating recognition of newly synthesized TA membrane proteins. ATP hydrolysis is required for insertion. Subsequently, the homodimer reverts towards the open dimer state, lowering its affinity for the membrane-bound receptor, and returning it to the cytosol to initiate a new round of targeting. The polypeptide is ATPase GET3 (Coccidioides posadasii (strain C735) (Valley fever fungus)).